The sequence spans 253 residues: Phycocyanobilin:ferredoxin oxidoreductase (253 aa).

This sequence belongs to the HY2 family.

It carries out the reaction (2R,3Z)-phycocyanobilin + 4 oxidized [2Fe-2S]-[ferredoxin] = biliverdin IXalpha + 4 reduced [2Fe-2S]-[ferredoxin] + 4 H(+). Its function is as follows. Catalyzes the four-electron reduction of biliverdin IX-alpha (2-electron reduction at both the A and D rings); the reaction proceeds via an isolatable 2-electron intermediate, 181,182-dihydrobiliverdin. This is Phycocyanobilin:ferredoxin oxidoreductase (pcyA) from Gloeobacter violaceus (strain ATCC 29082 / PCC 7421).